The chain runs to 21 residues: Natriuretic peptide TsNP (21 aa).

A disulfide bond links C5 and C21.

As to expression, expressed by the venom gland.

It is found in the secreted. In terms of biological role, scorpion venom natriuretic peptide that increases the perfusion pressure, glomerular filtration rate and urinary flow in the isolated perfused rat kidney assay. Induces a decrease of the percentages of renal transport for sodium, potassium and chloride and an increase of the urinary cGMP concentration. Also down-regulates the mRNA expression of natriuretic peptide receptor 1 (NPR1) in the kidneys whereas it up-regulates those of NPR2, NPR3 and guanylyl cyclase C (GUCY2C) mRNAs. May exhibit hypotensive and vasodepressor activities. The polypeptide is Natriuretic peptide TsNP (Tityus serrulatus (Brazilian scorpion)).